Reading from the N-terminus, the 440-residue chain is tRNA-2-methylthio-N(6)-dimethylallyladenosine synthase (440 aa).

The MTTase N-terminal domain maps to 4–120 (NYVYIETFGC…LNDMVLAAER (117 aa)). 6 residues coordinate [4Fe-4S] cluster: Cys-13, Cys-49, Cys-83, Cys-158, Cys-162, and Cys-165. One can recognise a Radical SAM core domain in the interval 144–374 (GTARISSFVT…QALQKRTTME (231 aa)). In terms of domain architecture, TRAM spans 377 to 439 (DVLLGTRQTV…QNSLLGELLP (63 aa)).

This sequence belongs to the methylthiotransferase family. MiaB subfamily. In terms of assembly, monomer. Requires [4Fe-4S] cluster as cofactor.

The protein resides in the cytoplasm. The catalysed reaction is N(6)-dimethylallyladenosine(37) in tRNA + (sulfur carrier)-SH + AH2 + 2 S-adenosyl-L-methionine = 2-methylsulfanyl-N(6)-dimethylallyladenosine(37) in tRNA + (sulfur carrier)-H + 5'-deoxyadenosine + L-methionine + A + S-adenosyl-L-homocysteine + 2 H(+). Catalyzes the methylthiolation of N6-(dimethylallyl)adenosine (i(6)A), leading to the formation of 2-methylthio-N6-(dimethylallyl)adenosine (ms(2)i(6)A) at position 37 in tRNAs that read codons beginning with uridine. The chain is tRNA-2-methylthio-N(6)-dimethylallyladenosine synthase from Pelobacter propionicus (strain DSM 2379 / NBRC 103807 / OttBd1).